The following is a 454-amino-acid chain: tRNA modification GTPase MnmE (454 aa).

The (6S)-5-formyl-5,6,7,8-tetrahydrofolate site is built by Arg23, Glu80, and Lys120. One can recognise a TrmE-type G domain in the interval 216 to 377; it reads GMKVVIAGRP…LRNHLKQSMG (162 aa). Asn226 contributes to the K(+) binding site. GTP is bound by residues 226–231, 245–251, 270–273, 335–338, and 358–360; these read NAGKSS, TDIAGTT, DTAG, NKAD, and SAR. Position 230 (Ser230) interacts with Mg(2+). 3 residues coordinate K(+): Thr245, Ile247, and Thr250. A Mg(2+)-binding site is contributed by Thr251. Residue Lys454 coordinates (6S)-5-formyl-5,6,7,8-tetrahydrofolate.

It belongs to the TRAFAC class TrmE-Era-EngA-EngB-Septin-like GTPase superfamily. TrmE GTPase family. As to quaternary structure, homodimer. Heterotetramer of two MnmE and two MnmG subunits. Requires K(+) as cofactor.

The protein localises to the cytoplasm. Its function is as follows. Exhibits a very high intrinsic GTPase hydrolysis rate. Involved in the addition of a carboxymethylaminomethyl (cmnm) group at the wobble position (U34) of certain tRNAs, forming tRNA-cmnm(5)s(2)U34. The polypeptide is tRNA modification GTPase MnmE (Klebsiella pneumoniae (strain 342)).